A 500-amino-acid chain; its full sequence is NAD(P)H-quinone oxidoreductase chain 4, chloroplastic (500 aa).

The next 14 membrane-spanning stretches (helical) occupy residues 3 to 23 (FFPW…VIFF), 37 to 57 (ICIC…HFQF), 84 to 104 (GLSI…TLAA), 111 to 129 (SRLF…IGSF), 134 to 154 (LLLF…LLSI), 167 to 187 (FILY…GVGL), 208 to 228 (ALEI…SPII), 242 to 262 (HYST…YGLI), 272 to 292 (AHSI…IYAA), 305 to 325 (IAYS…SITD), 330 to 350 (GAIL…FLAG), 386 to 406 (LALP…GIIT), 416 to 436 (ILIT…SLSM), and 462 to 482 (LFVS…PDFV).

This sequence belongs to the complex I subunit 4 family.

Its subcellular location is the plastid. The protein resides in the chloroplast thylakoid membrane. The catalysed reaction is a plastoquinone + NADH + (n+1) H(+)(in) = a plastoquinol + NAD(+) + n H(+)(out). The enzyme catalyses a plastoquinone + NADPH + (n+1) H(+)(in) = a plastoquinol + NADP(+) + n H(+)(out). The protein is NAD(P)H-quinone oxidoreductase chain 4, chloroplastic of Panax ginseng (Korean ginseng).